The following is a 465-amino-acid chain: UDP-N-acetylmuramate--L-alanine ligase (465 aa).

115 to 121 contributes to the ATP binding site; it reads GAHGKTT.

This sequence belongs to the MurCDEF family.

It localises to the cytoplasm. It carries out the reaction UDP-N-acetyl-alpha-D-muramate + L-alanine + ATP = UDP-N-acetyl-alpha-D-muramoyl-L-alanine + ADP + phosphate + H(+). It functions in the pathway cell wall biogenesis; peptidoglycan biosynthesis. In terms of biological role, cell wall formation. In Coxiella burnetii (strain Dugway 5J108-111), this protein is UDP-N-acetylmuramate--L-alanine ligase.